The following is a 481-amino-acid chain: Solute carrier family 46 member 2 (481 aa).

The Cytoplasmic portion of the chain corresponds to 1-37; the sequence is MGPEAAGPGRGAAPRLQVRTWIEPVVAATQVASSLYE. Residues 38-58 form a helical membrane-spanning segment; it reads AGLLLVVKASFGAGAGAGAGA. Residues 59–83 lie on the Extracellular side of the membrane; it reads ASNHSAGPPRGAPEDQQQRAISNFY. An N-linked (GlcNAc...) asparagine glycan is attached at Asn61. A helical membrane pass occupies residues 84-104; that stretch reads IVYNLVVGLTPLLSAYALGWL. The Cytoplasmic portion of the chain corresponds to 105-113; it reads SDRRHRKVA. Residues 114-134 form a helical membrane-spanning segment; sequence ICVALLGFLLSRVGLLLKVLL. Residues 135 to 143 lie on the Extracellular side of the membrane; sequence DWPVEVLYG. The chain crosses the membrane as a helical span at residues 144–164; the sequence is AAALNGLCGGFSAFWAGVMAL. Residues 165 to 179 lie on the Cytoplasmic side of the membrane; the sequence is GSLGSSEGRRSVRLV. Residues 180–200 traverse the membrane as a helical segment; sequence LIDLILGLAGFCGSMASGHLF. The Extracellular portion of the chain corresponds to 201–210; sequence KQVAGHSGQG. A helical transmembrane segment spans residues 211–231; sequence LVLTACSVSCATFALLYSLLV. Over 232-286 the chain is Cytoplasmic; sequence LKVPEAAAGSGQALSAGDSVAGTVGTYRTLDPDHSDKQSVQGLHPPSPGKAKPRR. Residues 263-282 are disordered; sequence PDHSDKQSVQGLHPPSPGKA. Residues 287-307 form a helical membrane-spanning segment; it reads TIIALLFLGAIVYDLAVVGTV. The Extracellular segment spans residues 308–326; sequence DVMPLFVLREPLSWNQVQV. Residues 327–347 traverse the membrane as a helical segment; sequence GYGMAAGYTIFITSFLGVLVF. The Cytoplasmic segment spans residues 348-353; it reads SRCFQD. A helical membrane pass occupies residues 354 to 374; sequence TTMIMIGMVSFGSGALLLAFV. Residues 375–376 are Extracellular-facing; sequence KE. A helical transmembrane segment spans residues 377-397; it reads TYMFYIARAVMLFALIPITTI. Over 398–412 the chain is Cytoplasmic; the sequence is RSAMSKLIKGSSYGK. Residues 413–433 traverse the membrane as a helical segment; it reads VFVILQLSLTLTGVVTSTVYN. Residues 434-446 lie on the Extracellular side of the membrane; sequence KIYQVTMEKFIGT. Residues 447-467 form a helical membrane-spanning segment; the sequence is CFALSSFLSFLAIIPIGIVAY. Over 468–481 the chain is Cytoplasmic; sequence KQASWLQYGDVRET.

Belongs to the major facilitator superfamily. SLC46A family. Glycosylated. Highly expressed by the epididymal duct epithelium.

The protein localises to the endosome membrane. It localises to the cell membrane. It catalyses the reaction N-acetyl-beta-D-glucosaminyl-(1-&gt;4)-1,6-anhydro-N-acetyl-beta-D-muramoyl-L-alanyl-gamma-D-glutamyl-meso-2,6-diaminopimeloyl-D-alanine(out) + n H(+)(out) = N-acetyl-beta-D-glucosaminyl-(1-&gt;4)-1,6-anhydro-N-acetyl-beta-D-muramoyl-L-alanyl-gamma-D-glutamyl-meso-2,6-diaminopimeloyl-D-alanine(in) + n H(+)(in). The catalysed reaction is L-alanyl-gamma-D-glutamyl-meso-2,6-diaminopimelate(out) + n H(+)(out) = L-alanyl-gamma-D-glutamyl-meso-2,6-diaminopimelate(in) + n H(+)(in). The enzyme catalyses N-acetyl-D-muramoyl-L-alanyl-D-isoglutamine(out) + n H(+)(out) = N-acetyl-D-muramoyl-L-alanyl-D-isoglutamine(in) + n H(+)(in). It carries out the reaction 2',3'-cGAMP(out) + n H(+)(out) = 2',3'-cGAMP(in) + n H(+)(in). It catalyses the reaction 3',3'-cGAMP(out) + n H(+)(out) = 3',3'-cGAMP(in) + n H(+)(in). Proton-coupled transporter that delivers pathogen-associated or danger-associated molecular patterns to cytosolic pattern recognition receptors as part of the innate immune response to microbes or tissue injury. Has selectivity toward muropeptides that contain the amino acid diaminopimelic acid (DAP-type peptidoglycan muropeptides) including Tri-DAP and tracheal toxin (TCT), common in Gram-negative bacteria and Gram-positive bacilli. In the context of immune recognition of skin microbiota, shuttles bacterial muropeptides across the endolysosomal membranes into the cytosol for recognition by NOD1, triggering MYD88-dependent secretion of IL1A and neutrophil recruitment in a pyroptosis-type inflammatory process. To a lesser extent and redundantly, transports muramyl dipeptides derived from most bacterial proteoglycans, eliciting NOD2 receptor activation and downstream inflammatory responses. Postulated to function as an importer of cyclic GMP-AMP dinucleotides (cGAMPs) in monocyte and macrophage cell lineages. Selectively imports cGAMPs derived from pathogenic bacteria such as 3'3'-cGAMP thus providing for differential immune recognition of pathogenic versus commensal bacteria. During tumorigenesis may transport extracellular tumor-derived 2'3'-cGAMP across the plasma membrane of M1-polarized macrophages to activate the anti-tumoral stimulator of interferon genes (STING) pathway. The transport mechanism, its electrogenicity and stoichiometry remain to be elucidated. This Canis lupus familiaris (Dog) protein is Solute carrier family 46 member 2.